Consider the following 112-residue polypeptide: Putative pterin-4-alpha-carbinolamine dehydratase (112 aa).

Belongs to the pterin-4-alpha-carbinolamine dehydratase family.

The enzyme catalyses (4aS,6R)-4a-hydroxy-L-erythro-5,6,7,8-tetrahydrobiopterin = (6R)-L-erythro-6,7-dihydrobiopterin + H2O. The protein is Putative pterin-4-alpha-carbinolamine dehydratase of Shewanella baltica (strain OS223).